Consider the following 880-residue polypeptide: GATOR2 complex protein MIOS-A (880 aa).

6 WD repeats span residues 60-102 (SDTP…NSKC), 113-157 (KHAR…TPEV), 185-224 (GQNDACLSLCWLPRDQKLLLAGMHRNLAIFDLRNTNQKMF), 226-264 (NTKAVQGVTVDPHFHDRVASFFEGQVAIWDLRKFEKPVL), 268-309 (EQPK…TPIG), and 399-441 (RLRA…KQYA). The C4-type zinc finger occupies 740-786 (VSCNFCGKSISYSCSSVPHQGRGFSQYGVSGSPTKSKFTSCPGCRKP). Zn(2+)-binding residues include cysteine 742, cysteine 745, cysteine 780, cysteine 783, cysteine 793, cysteine 832, cysteine 835, histidine 837, histidine 840, histidine 843, cysteine 854, cysteine 859, and cysteine 863. An RING-type; atypical zinc finger spans residues 787-868 (LPRCALCLIN…CSCKCMQLDT (82 aa)).

This sequence belongs to the WD repeat mio family. In terms of assembly, component of the GATOR2 subcomplex, composed of MIOS, SEC13, SEH1L, WDR24 and WDR59. The GATOR2 complex interacts with CASTOR1 and CASTOR2; the interaction is negatively regulated by arginine. The GATOR2 complex interacts with SESN1, SESN2 and SESN3; the interaction is negatively regulated by amino acids. Interacts with SAR1; the interaction is direct, disrupted by leucine and mediates the interaction of SAR1 with the GATOR2 complex to negatively regulate the TORC1 signaling upon leucine deprivation.

It is found in the lysosome membrane. With respect to regulation, the GATOR2 complex is negatively regulated by the upstream amino acid sensors CASTOR1 and SESN2, which sequester the GATOR2 complex in absence of amino acids. In the presence of abundant amino acids, GATOR2 is released from CASTOR1 and SESN2 and activated. In terms of biological role, as a component of the GATOR2 complex, functions as an activator of the amino acid-sensing branch of the mTORC1 signaling pathway. The GATOR2 complex indirectly activates mTORC1 through the inhibition of the GATOR1 subcomplex. GATOR2 probably acts as an E3 ubiquitin-protein ligase toward GATOR1. In the presence of abundant amino acids, the GATOR2 complex mediates ubiquitination of the NPRL2 core component of the GATOR1 complex, leading to GATOR1 inactivation. In the absence of amino acids, GATOR2 is inhibited, activating the GATOR1 complex. Within the GATOR2 complex, MIOS is required to prevent autoubiquitination of WDR24, the catalytic subunit of the complex. The chain is GATOR2 complex protein MIOS-A from Xenopus laevis (African clawed frog).